Consider the following 524-residue polypeptide: Solute carrier family 35 member F5 (524 aa).

The segment at 1-22 (MVPPRHHPGAGRPGALSSSPPF) is disordered. Over residues 13-22 (PGALSSSPPF) the composition is skewed to low complexity. Transmembrane regions (helical) follow at residues 69–89 (MALGIVILLLVDVIWVASSEL) and 101–121 (FFSTFAKTSMFVLYLLGFIVW). Position 207 is a phosphoserine (Ser-207). The next 8 membrane-spanning stretches (helical) occupy residues 244–264 (ISFFFCFVWFLANFSYQEALS), 269–289 (AIVNILSSTSGLFTLILAAMF), 297–317 (FTLSKLLAVILSIGGVVLVNL), 328–348 (TIGSIWSLVGAMLYAVYIVMI), 362–382 (MFFGFVGLFNLLLLWPGFFLL), 396–416 (VVLMCIVINGLIGTVLSEFLW), 421–441 (FLTSSLIGTLALSLTIPLSII), and 453–473 (WLFFAGAIPVFFSFFIATLLC). An EamA domain is found at 253–317 (FLANFSYQEA…SIGGVVLVNL (65 aa)).

The protein belongs to the SLC35F solute transporter family.

Its subcellular location is the membrane. Functionally, putative solute transporter. The sequence is that of Solute carrier family 35 member F5 (SLC35F5) from Bos taurus (Bovine).